A 170-amino-acid chain; its full sequence is CASP-like protein 1F1 (170 aa).

Over 1–16 (MMGDNEGRRTPLLNLG) the chain is Cytoplasmic. A helical membrane pass occupies residues 17 to 37 (VQVSMRVLTIGAAMASMWVMI). Over 38–62 (TNREVASVYGIAFEAKYSYSSAFRY) the chain is Extracellular. A helical membrane pass occupies residues 63 to 83 (LVYAQIAVCAATLFTLVWACL). At 84-88 (AVRRR) the chain is on the cytoplasmic side. The chain crosses the membrane as a helical span at residues 89–109 (GLVFALFFFDLLTTLTAISAF). At 110-141 (SAAFAEGYVGKYGNKQAGWLPICGYVHGYCSR) the chain is on the extracellular side. The chain crosses the membrane as a helical span at residues 142–162 (VTISLAMSFASFILLFILTVL). Topologically, residues 163-170 (TASAARHY) are cytoplasmic.

The protein belongs to the Casparian strip membrane proteins (CASP) family. In terms of assembly, homodimer and heterodimers. In terms of tissue distribution, in flowers, expressed in the anther wall.

It localises to the cell membrane. This Arabidopsis thaliana (Mouse-ear cress) protein is CASP-like protein 1F1.